The following is a 436-amino-acid chain: UDP-N-acetylmuramate--L-alanine ligase (436 aa).

111-117 contacts ATP; sequence GTHGKTS.

Belongs to the MurCDEF family.

The protein localises to the cytoplasm. The catalysed reaction is UDP-N-acetyl-alpha-D-muramate + L-alanine + ATP = UDP-N-acetyl-alpha-D-muramoyl-L-alanine + ADP + phosphate + H(+). The protein operates within cell wall biogenesis; peptidoglycan biosynthesis. Functionally, cell wall formation. In Lactiplantibacillus plantarum (strain ATCC BAA-793 / NCIMB 8826 / WCFS1) (Lactobacillus plantarum), this protein is UDP-N-acetylmuramate--L-alanine ligase.